We begin with the raw amino-acid sequence, 157 residues long: Small ribosomal subunit protein uS7 (157 aa).

This sequence belongs to the universal ribosomal protein uS7 family. As to quaternary structure, part of the 30S ribosomal subunit. Contacts proteins S9 and S11.

In terms of biological role, one of the primary rRNA binding proteins, it binds directly to 16S rRNA where it nucleates assembly of the head domain of the 30S subunit. Is located at the subunit interface close to the decoding center, probably blocks exit of the E-site tRNA. The chain is Small ribosomal subunit protein uS7 from Rhodopirellula baltica (strain DSM 10527 / NCIMB 13988 / SH1).